The sequence spans 404 residues: Cysteine desulfurase IscS (404 aa).

Pyridoxal 5'-phosphate contacts are provided by residues 75 to 76 (AT), Asn-155, Gln-183, and 203 to 205 (SGH). Position 206 is an N6-(pyridoxal phosphate)lysine (Lys-206). Thr-243 provides a ligand contact to pyridoxal 5'-phosphate. Cys-328 (cysteine persulfide intermediate) is an active-site residue. Cys-328 contacts [2Fe-2S] cluster.

Belongs to the class-V pyridoxal-phosphate-dependent aminotransferase family. NifS/IscS subfamily. In terms of assembly, homodimer. Forms a heterotetramer with IscU, interacts with other sulfur acceptors. It depends on pyridoxal 5'-phosphate as a cofactor.

It localises to the cytoplasm. The catalysed reaction is (sulfur carrier)-H + L-cysteine = (sulfur carrier)-SH + L-alanine. It participates in cofactor biosynthesis; iron-sulfur cluster biosynthesis. Functionally, master enzyme that delivers sulfur to a number of partners involved in Fe-S cluster assembly, tRNA modification or cofactor biosynthesis. Catalyzes the removal of elemental sulfur and selenium atoms from cysteine and selenocysteine to produce alanine. Functions as a sulfur delivery protein for Fe-S cluster synthesis onto IscU, an Fe-S scaffold assembly protein, as well as other S acceptor proteins. Also functions as a selenium delivery protein in the pathway for the biosynthesis of selenophosphate. This Escherichia coli (strain K12 / DH10B) protein is Cysteine desulfurase IscS.